A 155-amino-acid polypeptide reads, in one-letter code: MKLLIVAVGQRVPDWAQTACNDYAKRLPPELKLELKAVKTEPRAGKTLASLLAAERGRIEAAIPRGAQVVALDERGTRLTTLALAERLRGWQLVGDTVALLVGGPDGLDPALRQAAHERIRLSDLTLPHALVRVLLIEQLYRAWSLHAGHPYHRE.

S-adenosyl-L-methionine-binding positions include Leu72, Gly103, and 122-127 (LSDLTL).

It belongs to the RNA methyltransferase RlmH family. As to quaternary structure, homodimer.

The protein localises to the cytoplasm. The enzyme catalyses pseudouridine(1915) in 23S rRNA + S-adenosyl-L-methionine = N(3)-methylpseudouridine(1915) in 23S rRNA + S-adenosyl-L-homocysteine + H(+). Functionally, specifically methylates the pseudouridine at position 1915 (m3Psi1915) in 23S rRNA. The protein is Ribosomal RNA large subunit methyltransferase H of Verminephrobacter eiseniae (strain EF01-2).